Consider the following 171-residue polypeptide: Transcription antitermination protein NusB (171 aa).

The protein belongs to the NusB family.

Involved in transcription antitermination. Required for transcription of ribosomal RNA (rRNA) genes. Binds specifically to the boxA antiterminator sequence of the ribosomal RNA (rrn) operons. The chain is Transcription antitermination protein NusB from Pelodictyon phaeoclathratiforme (strain DSM 5477 / BU-1).